A 155-amino-acid chain; its full sequence is Small ribosomal subunit protein uS7 (155 aa).

It belongs to the universal ribosomal protein uS7 family. Part of the 30S ribosomal subunit. Contacts proteins S9 and S11.

One of the primary rRNA binding proteins, it binds directly to 16S rRNA where it nucleates assembly of the head domain of the 30S subunit. Is located at the subunit interface close to the decoding center, probably blocks exit of the E-site tRNA. In Chlorobium phaeobacteroides (strain DSM 266 / SMG 266 / 2430), this protein is Small ribosomal subunit protein uS7.